A 468-amino-acid polypeptide reads, in one-letter code: Argininosuccinate lyase (468 aa).

Belongs to the lyase 1 family. Argininosuccinate lyase subfamily.

The protein resides in the cytoplasm. The enzyme catalyses 2-(N(omega)-L-arginino)succinate = fumarate + L-arginine. It participates in amino-acid biosynthesis; L-arginine biosynthesis; L-arginine from L-ornithine and carbamoyl phosphate: step 3/3. The sequence is that of Argininosuccinate lyase from Sphingopyxis alaskensis (strain DSM 13593 / LMG 18877 / RB2256) (Sphingomonas alaskensis).